The primary structure comprises 400 residues: Putative C-type lectin domain family 20 member A (400 aa).

The signal sequence occupies residues 1–20 (MLPRALLLSFCAAALQLVSS). C-type lectin domains are found at residues 26 to 131 (LVKE…FLCY) and 159 to 275 (ISGQ…FFCF). 4 disulfide bridges follow: Cys40-Cys130, Cys105-Cys122, Cys180-Cys274, and Cys248-Cys266. The segment at 287–346 (ELPPLFHTSPTEMTEETTPRPGRAVASVGSGTDRRDTAAATEAQHLSSESKEKTSAQKSG) is disordered.

The sequence is that of Putative C-type lectin domain family 20 member A from Homo sapiens (Human).